The following is a 354-amino-acid chain: Elongation factor Ts (354 aa).

Residues 81 to 84 (TDFV) are involved in Mg(2+) ion dislocation from EF-Tu.

It belongs to the EF-Ts family.

Its subcellular location is the cytoplasm. Functionally, associates with the EF-Tu.GDP complex and induces the exchange of GDP to GTP. It remains bound to the aminoacyl-tRNA.EF-Tu.GTP complex up to the GTP hydrolysis stage on the ribosome. In Campylobacter concisus (strain 13826), this protein is Elongation factor Ts.